Here is a 420-residue protein sequence, read N- to C-terminus: D-tagatose-1,6-bisphosphate aldolase subunit GatZ (420 aa).

The protein belongs to the GatZ/KbaZ family. GatZ subfamily. As to quaternary structure, forms a complex with GatY.

It functions in the pathway carbohydrate metabolism; D-tagatose 6-phosphate degradation; D-glyceraldehyde 3-phosphate and glycerone phosphate from D-tagatose 6-phosphate: step 2/2. In terms of biological role, component of the tagatose-1,6-bisphosphate aldolase GatYZ that is required for full activity and stability of the Y subunit. Could have a chaperone-like function for the proper and stable folding of GatY. When expressed alone, GatZ does not show any aldolase activity. Is involved in the catabolism of galactitol. The chain is D-tagatose-1,6-bisphosphate aldolase subunit GatZ from Escherichia coli O45:K1 (strain S88 / ExPEC).